Consider the following 449-residue polypeptide: Glucose-6-phosphate isomerase (449 aa).

Catalysis depends on glutamate 291, which acts as the Proton donor. Catalysis depends on residues histidine 312 and lysine 426.

This sequence belongs to the GPI family.

The protein localises to the cytoplasm. The catalysed reaction is alpha-D-glucose 6-phosphate = beta-D-fructose 6-phosphate. The protein operates within carbohydrate biosynthesis; gluconeogenesis. It participates in carbohydrate degradation; glycolysis; D-glyceraldehyde 3-phosphate and glycerone phosphate from D-glucose: step 2/4. In terms of biological role, catalyzes the reversible isomerization of glucose-6-phosphate to fructose-6-phosphate. The chain is Glucose-6-phosphate isomerase from Streptococcus pneumoniae (strain CGSP14).